A 264-amino-acid chain; its full sequence is ATP synthase subunit b 1 (264 aa).

Residues Leu2–Leu22 traverse the membrane as a helical segment. The segment at Ala240–Asp264 is disordered. Residues Glu255 to Asp264 show a composition bias toward basic and acidic residues.

The protein belongs to the ATPase B chain family. F-type ATPases have 2 components, F(1) - the catalytic core - and F(0) - the membrane proton channel. F(1) has five subunits: alpha(3), beta(3), gamma(1), delta(1), epsilon(1). F(0) has four main subunits: a(1), b(2) and c(10-14). The alpha and beta chains form an alternating ring which encloses part of the gamma chain. F(1) is attached to F(0) by a central stalk formed by the gamma and epsilon chains, while a peripheral stalk is formed by the delta and b chains.

Its subcellular location is the cell inner membrane. F(1)F(0) ATP synthase produces ATP from ADP in the presence of a proton or sodium gradient. F-type ATPases consist of two structural domains, F(1) containing the extramembraneous catalytic core and F(0) containing the membrane proton channel, linked together by a central stalk and a peripheral stalk. During catalysis, ATP synthesis in the catalytic domain of F(1) is coupled via a rotary mechanism of the central stalk subunits to proton translocation. Functionally, component of the F(0) channel, it forms part of the peripheral stalk, linking F(1) to F(0). The sequence is that of ATP synthase subunit b 1 from Chlorobium luteolum (strain DSM 273 / BCRC 81028 / 2530) (Pelodictyon luteolum).